The chain runs to 272 residues: HMP-PP phosphatase (272 aa).

Residue Asp8 is the Nucleophile of the active site. 3 residues coordinate Mg(2+): Asp8, Asp10, and Asp212.

Belongs to the HAD-like hydrolase superfamily. Cof family. Mg(2+) is required as a cofactor.

It catalyses the reaction 4-amino-2-methyl-5-(diphosphooxymethyl)pyrimidine + H2O = 4-amino-2-methyl-5-(phosphooxymethyl)pyrimidine + phosphate + H(+). Functionally, catalyzes the hydrolysis of 4-amino-2-methyl-5-hydroxymethylpyrimidine pyrophosphate (HMP-PP) to 4-amino-2-methyl-5-hydroxymethylpyrimidine phosphate (HMP-P). This chain is HMP-PP phosphatase, found in Salmonella schwarzengrund (strain CVM19633).